We begin with the raw amino-acid sequence, 125 residues long: Translation initiation factor 5A (125 aa).

Position 35 is a hypusine (Lys-35).

It belongs to the eIF-5A family.

It localises to the cytoplasm. Functions by promoting the formation of the first peptide bond. In Methanoculleus marisnigri (strain ATCC 35101 / DSM 1498 / JR1), this protein is Translation initiation factor 5A (eIF5A).